A 123-amino-acid chain; its full sequence is Small ribosomal subunit protein uS12 (123 aa).

D89 is subject to 3-methylthioaspartic acid.

Belongs to the universal ribosomal protein uS12 family. As to quaternary structure, part of the 30S ribosomal subunit. Contacts proteins S8 and S17. May interact with IF1 in the 30S initiation complex.

Functionally, with S4 and S5 plays an important role in translational accuracy. In terms of biological role, interacts with and stabilizes bases of the 16S rRNA that are involved in tRNA selection in the A site and with the mRNA backbone. Located at the interface of the 30S and 50S subunits, it traverses the body of the 30S subunit contacting proteins on the other side and probably holding the rRNA structure together. The combined cluster of proteins S8, S12 and S17 appears to hold together the shoulder and platform of the 30S subunit. In Geotalea uraniireducens (strain Rf4) (Geobacter uraniireducens), this protein is Small ribosomal subunit protein uS12.